Consider the following 388-residue polypeptide: uncharacterized protein (388 aa).

[4Fe-4S] cluster contacts are provided by cysteine 18, cysteine 24, cysteine 27, and cysteine 99. Residues glutamine 212, glutamate 262, and asparagine 313 each contribute to the S-adenosyl-L-methionine site. The active-site Nucleophile is cysteine 343.

The protein belongs to the class I-like SAM-binding methyltransferase superfamily. RNA M5U methyltransferase family.

This is an uncharacterized protein from Bdellovibrio bacteriovorus (strain ATCC 15356 / DSM 50701 / NCIMB 9529 / HD100).